We begin with the raw amino-acid sequence, 307 residues long: MVGGGVIRQLLRRKLHSQSVATPVLSWLSSKKANEDAGSAGLRAFALMGAGITGLLSFSTVASADEAEHGLECPNYPWPHEGILSSYDHASIRRGHQVYQQVCASCHSMSLISYRDLVGVAYTEEEAKAMAAEIEVVDGPNDEGEMFTRPGKLSDRLPEPYSNESAARFANGGAYPPDLSLVTKARHNGQNYVFALLTGYRDPPAGISIREGLHYNPYFPGGAIAMPKMLNDEAVEYEDGTPATEAQMGKDVVSFLSWAAEPEMEERKLMGFKWIFLLSLALLQAAYYRRLKWSVLKSRKLVLDVVN.

A mitochondrion-targeting transit peptide spans Met1–Ala64. Topologically, residues Asp65–Met270 are mitochondrial intermembrane. In terms of domain architecture, Cytochrome c spans Ala90–Leu197. Residues Cys103, Cys106, His107, and Met226 each contribute to the heme c site. A helical transmembrane segment spans residues Gly271–Tyr288. Residues Arg289 to Asn307 lie on the Mitochondrial matrix side of the membrane.

Belongs to the cytochrome c family. As to quaternary structure, component of the ubiquinol-cytochrome c oxidoreductase (cytochrome b-c1 complex, complex III, CIII), a multisubunit enzyme composed of 10 subunits. The complex is composed of 3 respiratory subunits cytochrome b (MT-CYB), cytochrome c1 (CYC1-1 or CYC1-2) and Rieske protein (UCR1-1 or UCR1-2), 2 core protein subunits MPPalpha1 (or MPPalpha2) and MPPB, and 5 low-molecular weight protein subunits QCR7-1 (or QCR7-2), UCRQ-1 (or UCRQ-2), QCR9, UCRY and probably QCR6-1 (or QCR6-2). The complex exists as an obligatory dimer and forms supercomplexes (SCs) in the inner mitochondrial membrane with NADH-ubiquinone oxidoreductase (complex I, CI), resulting in different assemblies (supercomplexes SCI(1)III(2) and SCI(2)III(4)). In terms of processing, binds 1 heme c group covalently per subunit.

Its subcellular location is the mitochondrion inner membrane. Its function is as follows. Component of the ubiquinol-cytochrome c oxidoreductase, a multisubunit transmembrane complex that is part of the mitochondrial electron transport chain which drives oxidative phosphorylation. The respiratory chain contains 3 multisubunit complexes succinate dehydrogenase (complex II, CII), ubiquinol-cytochrome c oxidoreductase (cytochrome b-c1 complex, complex III, CIII) and cytochrome c oxidase (complex IV, CIV), that cooperate to transfer electrons derived from NADH and succinate to molecular oxygen, creating an electrochemical gradient over the inner membrane that drives transmembrane transport and the ATP synthase. The cytochrome b-c1 complex catalyzes electron transfer from ubiquinol to cytochrome c, linking this redox reaction to translocation of protons across the mitochondrial inner membrane, with protons being carried across the membrane as hydrogens on the quinol. In the process called Q cycle, 2 protons are consumed from the matrix, 4 protons are released into the intermembrane space and 2 electrons are passed to cytochrome c. Cytochrome c1 is a catalytic core subunit containing a c-type heme. It transfers electrons from the [2Fe-2S] iron-sulfur cluster of the Rieske protein to cytochrome c. In Arabidopsis thaliana (Mouse-ear cress), this protein is Cytochrome c1 2, heme protein, mitochondrial (CYC1-2).